Reading from the N-terminus, the 545-residue chain is Chaperonin GroEL (545 aa).

Residues 30 to 33, Lys-51, 87 to 91, Gly-415, and Asp-495 each bind ATP; these read TLGP and DGTTT.

This sequence belongs to the chaperonin (HSP60) family. Forms a cylinder of 14 subunits composed of two heptameric rings stacked back-to-back. Interacts with the co-chaperonin GroES.

The protein localises to the cytoplasm. The catalysed reaction is ATP + H2O + a folded polypeptide = ADP + phosphate + an unfolded polypeptide.. Together with its co-chaperonin GroES, plays an essential role in assisting protein folding. The GroEL-GroES system forms a nano-cage that allows encapsulation of the non-native substrate proteins and provides a physical environment optimized to promote and accelerate protein folding. The sequence is that of Chaperonin GroEL from Shewanella amazonensis (strain ATCC BAA-1098 / SB2B).